Here is a 300-residue protein sequence, read N- to C-terminus: Cation-efflux pump FieF (300 aa).

Residues 24 to 44 (LLIKIFAWWYTGSVSILAALV) form a helical membrane-spanning segment. Zn(2+) contacts are provided by aspartate 45 and aspartate 49. A run of 2 helical transmembrane segments spans residues 82–102 (AALA…LTGI) and 114–134 (AGVG…LVTF). Zn(2+)-binding residues include histidine 153 and aspartate 157. The next 2 membrane-spanning stretches (helical) occupy residues 156 to 176 (SDVM…YGWH) and 178 to 198 (ADAL…LRMG).

The protein belongs to the cation diffusion facilitator (CDF) transporter (TC 2.A.4) family. FieF subfamily. As to quaternary structure, homodimer.

The protein resides in the cell inner membrane. It catalyses the reaction Zn(2+)(in) + H(+)(out) = Zn(2+)(out) + H(+)(in). It carries out the reaction Cd(2+)(in) + H(+)(out) = Cd(2+)(out) + H(+)(in). The enzyme catalyses Fe(2+)(in) + H(+)(out) = Fe(2+)(out) + H(+)(in). Divalent metal cation transporter which exports Zn(2+), Cd(2+) and possibly Fe(2+). May be involved in zinc and iron detoxification by efflux. In Klebsiella pneumoniae subsp. pneumoniae (strain ATCC 700721 / MGH 78578), this protein is Cation-efflux pump FieF.